Here is a 149-residue protein sequence, read N- to C-terminus: Arginine repressor (149 aa).

This sequence belongs to the ArgR family.

It localises to the cytoplasm. Its pathway is amino-acid biosynthesis; L-arginine biosynthesis [regulation]. Regulates arginine biosynthesis genes. The chain is Arginine repressor from Geobacillus kaustophilus (strain HTA426).